Consider the following 222-residue polypeptide: Probable fimbrial chaperone EcpB (222 aa).

The first 20 residues, 1 to 20, serve as a signal peptide directing secretion; the sequence is MKKHLLPLALLLSGISPAQA.

It belongs to the EcpB/EcpE family.

Its function is as follows. Part of the ecpRABCDE operon, which encodes the E.coli common pilus (ECP). ECP is found in both commensal and pathogenic strains and plays a dual role in early-stage biofilm development and host cell recognition. This chain is Probable fimbrial chaperone EcpB (ecpB), found in Escherichia coli O7:K1 (strain IAI39 / ExPEC).